The chain runs to 382 residues: 4-hydroxy-3-methylbut-2-en-1-yl diphosphate synthase (flavodoxin) (382 aa).

4 residues coordinate [4Fe-4S] cluster: C290, C293, C327, and E334.

It belongs to the IspG family. The cofactor is [4Fe-4S] cluster.

The catalysed reaction is (2E)-4-hydroxy-3-methylbut-2-enyl diphosphate + oxidized [flavodoxin] + H2O + 2 H(+) = 2-C-methyl-D-erythritol 2,4-cyclic diphosphate + reduced [flavodoxin]. It participates in isoprenoid biosynthesis; isopentenyl diphosphate biosynthesis via DXP pathway; isopentenyl diphosphate from 1-deoxy-D-xylulose 5-phosphate: step 5/6. Converts 2C-methyl-D-erythritol 2,4-cyclodiphosphate (ME-2,4cPP) into 1-hydroxy-2-methyl-2-(E)-butenyl 4-diphosphate. This Rhodopirellula baltica (strain DSM 10527 / NCIMB 13988 / SH1) protein is 4-hydroxy-3-methylbut-2-en-1-yl diphosphate synthase (flavodoxin).